A 228-amino-acid polypeptide reads, in one-letter code: Transmembrane protein 186 (228 aa).

Residues Met1–Lys93 lie on the Mitochondrial matrix side of the membrane. The helical transmembrane segment at Leu94–Leu112 threads the bilayer. Residues Gln113–Val118 are Mitochondrial intermembrane-facing. Residues Leu119–Phe141 form a helical membrane-spanning segment. At Val142–Ser228 the chain is on the mitochondrial matrix side.

This sequence belongs to the TMEM186 family.

It is found in the mitochondrion inner membrane. In terms of biological role, may be required for efficient assembly of the mitochondrial complex I. The polypeptide is Transmembrane protein 186 (Danio rerio (Zebrafish)).